The primary structure comprises 301 residues: Rhodopsin (301 aa).

The Extracellular portion of the chain corresponds to Leu1–Met18. Residues Tyr19–Val43 traverse the membrane as a helical segment. Topologically, residues Phe44–Asn55 are cytoplasmic. The helical transmembrane segment at Leu56–Ile78 threads the bilayer. The Extracellular segment spans residues Thr79–Cys92. A disulfide bond links Cys92 and Cys169. The helical transmembrane segment at Gln93–Phe115 threads the bilayer. Residues Asp116–Tyr118 carry the 'Ionic lock' involved in activated form stabilization motif. At Asp116–Lys134 the chain is on the cytoplasmic side. The chain crosses the membrane as a helical span at residues Ala135 to Phe155. Residues Gly156 to Ser182 lie on the Extracellular side of the membrane. An N-linked (GlcNAc...) asparagine glycan is attached at Asn165. The chain crosses the membrane as a helical span at residues Tyr183 to Val204. Over Val205–Lys245 the chain is Cytoplasmic. A helical transmembrane segment spans residues Ile246 to Val267. The Extracellular segment spans residues Gly268–Val278. A helical transmembrane segment spans residues Tyr279–Ile300. An N6-(retinylidene)lysine modification is found at Lys288.

This sequence belongs to the G-protein coupled receptor 1 family. Opsin subfamily. In terms of assembly, homodimer. Interacts with GNAQ. In terms of processing, contains one covalently linked retinal chromophore.

It localises to the cell projection. The protein resides in the rhabdomere membrane. Photoreceptor required for image-forming vision at low light intensity. Can use both retinal and 3-dehydroretinal as visual pigment. Light-induced isomerization of 11-cis to all-trans retinal triggers a conformational change that activates signaling via G-proteins. Signaling via GNAQ probably mediates the activation of phospholipase C. This Orconectes australis (Southern cave crayfish) protein is Rhodopsin (RHO).